Consider the following 384-residue polypeptide: Probable E3 ubiquitin-protein ligase rnf113 (384 aa).

The segment covering 1-11 has biased composition (basic residues); it reads MDLFRKPKKRN. Residues 1-96 form a disordered region; that stretch reads MDLFRKPKKR…GPSGPRDQGA (96 aa). Positions 42 to 52 are enriched in polar residues; it reads PMVQSTKQLDA. Residues 60–71 are compositionally biased toward acidic residues; that stretch reads SSDDSDDSDDNQ. Residues 175 to 203 form a C3H1-type zinc finger; the sequence is DFAPDICKDYKETGFCTFGDSCKFVHDRS. Residues 241 to 279 form an RING-type zinc finger; it reads CFICGNPFVDPIVTKCKHYFCTGCALKSFQKSSKCPICQ. The disordered stretch occupies residues 299 to 384; it reads KKQQQKQEAE…ESDDDDAEKD (86 aa). Basic and acidic residues-rich tracts occupy residues 303-312 and 320-334; these read QKQEAEKQEE and EKPH…HDHE. A compositionally biased stretch (acidic residues) spans 351–384; sequence EKSDEEQEIMMEDVEGLEGGENDSESDDDDAEKD.

The enzyme catalyses S-ubiquitinyl-[E2 ubiquitin-conjugating enzyme]-L-cysteine + [acceptor protein]-L-lysine = [E2 ubiquitin-conjugating enzyme]-L-cysteine + N(6)-ubiquitinyl-[acceptor protein]-L-lysine.. It functions in the pathway protein modification; protein ubiquitination. In terms of biological role, may function as E3 ubiquitin-protein ligase that catalyzes the transfer of ubiquitin onto target proteins. May play a role in DNA repair via its role in the synthesis of 'Lys-63'-linked polyubiquitin chains that recruit proteins involved in repair to sites of DNA damage by alkylating agents. This Caenorhabditis elegans protein is Probable E3 ubiquitin-protein ligase rnf113 (rnf-113).